The sequence spans 107 residues: Proteinase inhibitor I-B (107 aa).

A signal peptide spans 1 to 22 (MVKFAHVVAFLLLASLFQPLTA). The propeptide occupies 23–39 (RDLEINVLQLDVSQSGC).

The protein belongs to the protease inhibitor I13 (potato type I serine protease inhibitor) family.

It localises to the secreted. The chain is Proteinase inhibitor I-B (TIMPA) from Nicotiana tabacum (Common tobacco).